The primary structure comprises 631 residues: Eukaryotic translation initiation factor 2-alpha kinase 1 (631 aa).

Residues 1-34 (MQGGNSGVRKREEEGGGEGAVAAPPAIDFPAESS) form a disordered region. The SIFI-degron signature appears at 85-104 (LRSRQVFKLLCQTFIKMGLL). The Protein kinase domain maps to 167–583 (FEEVAILGKG…AVQLLQSELF (417 aa)). ATP-binding positions include 173-181 (LGKGGYGRV) and Lys196. Residues 260–301 (QEEDREQYDVKNDESSSSSIVFAEPTPEKGKRFGESDTENQN) are disordered. Thr285 is modified (phosphothreonine). The span at 285–301 (TPEKGKRFGESDTENQN) shows a compositional bias: basic and acidic residues. The HRM 1 repeat unit spans residues 410–415 (ACPYVM). Residue Asp442 is the Proton acceptor of the active site. Phosphothreonine; by autocatalysis is present on residues Thr486 and Thr488. Thr493 carries the post-translational modification Phosphothreonine. The HRM 2 repeat unit spans residues 552–557 (RCPVQA).

Belongs to the protein kinase superfamily. Ser/Thr protein kinase family. GCN2 subfamily. In terms of assembly, synthesized in an inactive form that binds to the N-terminal domain of CDC37. Has to be associated with a multiprotein complex containing Hsp90, CDC37 and PPP5C for maturation and activation by autophosphorylation. The phosphatase PPP5C modulates this activation. Homodimer; homodimerizes in presence of heme, forming a disulfide-linked inactive homodimer. Interacts with DELE1; binds both to full-length DELE1 and processed form of DELE1 (S-DELE1) in response to stress, leading to activate its protein kinase activity and trigger the integrated stress response (ISR). In terms of processing, activated by autophosphorylation; phosphorylated predominantly on serine and threonine residues, but also on tyrosine residues. Autophosphorylation at Thr-488 is required for kinase activation. The active autophosphorylated form apparently is largely refractory to cellular heme fluctuations. Ubiquitinated and degraded by the SIFI complex once the mitochondrial stress has been resolved, thereby providing stress response silencing. Within the SIFI complex, UBR4 initiates ubiquitin chain that are further elongated or branched by KCMF1.

The protein resides in the cytoplasm. The catalysed reaction is L-seryl-[protein] + ATP = O-phospho-L-seryl-[protein] + ADP + H(+). It carries out the reaction L-threonyl-[protein] + ATP = O-phospho-L-threonyl-[protein] + ADP + H(+). Its activity is regulated as follows. In normal conditions, the protein kinase activity is inhibited; inhibition is relieved by various stress conditions. Inhibited by heme: in presence of heme, forms a disulfide-linked inactive homodimer. Heme depletion relieves inhibition and stimulates kinase activity by autophosphorylation. Inhibited by the heme metabolites biliverdin and bilirubin. Induced by oxidative stress generated by arsenite treatment. Binding of nitric oxide (NO) to the heme iron in the N-terminal heme-binding domain activates the kinase activity, while binding of carbon monoxide (CO) suppresses kinase activity. Protein kinase activity is also activated upon binding to DELE1 in response to various stress, triggering the integrated stress response (ISR): activated by full-length DELE1 in response to iron deficiency, while it is activated by the processed form of DELE1 (S-DELE1) in response to mitochondrial stress. Metabolic-stress sensing protein kinase that phosphorylates the alpha subunit of eukaryotic translation initiation factor 2 (EIF2S1/eIF-2-alpha) in response to various stress conditions. Key activator of the integrated stress response (ISR) required for adaptation to various stress, such as heme deficiency, oxidative stress, osmotic shock, mitochondrial dysfunction and heat shock. EIF2S1/eIF-2-alpha phosphorylation in response to stress converts EIF2S1/eIF-2-alpha in a global protein synthesis inhibitor, leading to a global attenuation of cap-dependent translation, while concomitantly initiating the preferential translation of ISR-specific mRNAs, such as the transcriptional activator ATF4, and hence allowing ATF4-mediated reprogramming. Acts as a key sensor of heme-deficiency: in normal conditions, binds hemin via a cysteine thiolate and histidine nitrogenous coordination, leading to inhibit the protein kinase activity. This binding occurs with moderate affinity, allowing it to sense the heme concentration within the cell: heme depletion relieves inhibition and stimulates kinase activity, activating the ISR. Thanks to this unique heme-sensing capacity, plays a crucial role to shut off protein synthesis during acute heme-deficient conditions. In red blood cells (RBCs), controls hemoglobin synthesis ensuring a coordinated regulation of the synthesis of its heme and globin moieties. It thereby plays an essential protective role for RBC survival in anemias of iron deficiency. Iron deficiency also triggers activation by full-length DELE1. Also activates the ISR in response to mitochondrial dysfunction: HRI/EIF2AK1 protein kinase activity is activated upon binding to the processed form of DELE1 (S-DELE1), thereby promoting the ATF4-mediated reprogramming. Also acts as an activator of mitophagy in response to mitochondrial damage: catalyzes phosphorylation of eIF-2-alpha (EIF2S1) following activation by S-DELE1, thereby promoting mitochondrial localization of EIF2S1, triggering PRKN-independent mitophagy. The protein is Eukaryotic translation initiation factor 2-alpha kinase 1 of Macaca fascicularis (Crab-eating macaque).